A 266-amino-acid polypeptide reads, in one-letter code: Proteasome subunit alpha type-1 (266 aa).

Residues 235-266 (DGFKTRPEDIPAVADNEEDDDELHEQPPDVEE) are disordered. A compositionally biased stretch (acidic residues) spans 249–266 (DNEEDDDELHEQPPDVEE).

Belongs to the peptidase T1A family. In terms of assembly, the 26S proteasome consists of a 20S proteasome core and two 19S regulatory subunits. The 20S proteasome core is composed of 28 subunits that are arranged in four stacked rings, resulting in a barrel-shaped structure. The two end rings are each formed by seven alpha subunits, and the two central rings are each formed by seven beta subunits. The catalytic chamber with the active sites is on the inside of the barrel.

Its subcellular location is the cytoplasm. It is found in the nucleus. The proteasome is a multicatalytic proteinase complex which is characterized by its ability to cleave peptides with Arg, Phe, Tyr, Leu, and Glu adjacent to the leaving group at neutral or slightly basic pH. The proteasome has an ATP-dependent proteolytic activity. In Trypanosoma brucei rhodesiense, this protein is Proteasome subunit alpha type-1.